A 1058-amino-acid chain; its full sequence is Ubiquitin-like modifier-activating enzyme 1 (1058 aa).

The disordered stretch occupies residues 1–46 (MSSSPLSKKRRVSGPDPKPGSNCSSAQSVLSEVSSVPTNGMAKNGS). Ser-2 carries the post-translational modification N-acetylserine. Phosphoserine occurs at positions 4, 13, 21, 24, and 46. Over residues 24 to 36 (SSAQSVLSEVSSV) the composition is skewed to low complexity. Tyr-55 carries the post-translational modification Phosphotyrosine. 2 tandem repeats follow at residues 63–199 (GHEA…GQLF) and 459–611 (GSDL…QVVI). A 2 approximate repeats region spans residues 63–611 (GHEAMKMLQT…GTKGNVQVVI (549 aa)). ATP-binding positions include Ala-478, Asp-504, Arg-515, Lys-528, and 576-577 (DN). Lys-528 is subject to N6-succinyllysine. Residue Cys-632 is the Glycyl thioester intermediate of the active site. At Lys-671 the chain carries N6-acetyllysine. At Thr-800 the chain carries Phosphothreonine. A phosphoserine mark is found at Ser-810, Ser-816, Ser-820, and Ser-835. N6-acetyllysine is present on Lys-980.

It belongs to the ubiquitin-activating E1 family. In terms of assembly, monomer. Interacts with GAN (via BTB domain). Post-translationally, ISGylated.

The protein localises to the cytoplasm. Its subcellular location is the mitochondrion. It localises to the nucleus. The catalysed reaction is ATP + ubiquitin + [E1 ubiquitin-activating enzyme]-L-cysteine = AMP + diphosphate + S-ubiquitinyl-[E1 ubiquitin-activating enzyme]-L-cysteine.. It participates in protein modification; protein ubiquitination. Catalyzes the first step in ubiquitin conjugation to mark cellular proteins for degradation through the ubiquitin-proteasome system. Activates ubiquitin by first adenylating its C-terminal glycine residue with ATP, and thereafter linking this residue to the side chain of a cysteine residue in E1, yielding a ubiquitin-E1 thioester and free AMP. Essential for the formation of radiation-induced foci, timely DNA repair and for response to replication stress. Promotes the recruitment of TP53BP1 and BRCA1 at DNA damage sites. The sequence is that of Ubiquitin-like modifier-activating enzyme 1 from Rattus norvegicus (Rat).